Here is a 137-residue protein sequence, read N- to C-terminus: MRTLWIVTVLLVGVEGSLVELGKMILQETGKNPLTSYGVYGCNCGVGGRHKPKDGTDRCCYVHKCCYKKMTDCDPKKDRYSYSWKDKTIVCDENNPCLKELCECDKAVAICLRENLDTYNKKYKIYPKFFCKKAEPC.

An N-terminal signal peptide occupies residues 1-16; sequence MRTLWIVTVLLVGVEG. Intrachain disulfides connect Cys-42–Cys-131, Cys-44–Cys-60, Cys-59–Cys-111, Cys-65–Cys-137, Cys-66–Cys-104, Cys-73–Cys-97, and Cys-91–Cys-102. The interval 121–133 is important for membrane-damaging activities in eukaryotes and bacteria; heparin-binding; sequence KKYKIYPKFFCKK.

This sequence belongs to the phospholipase A2 family. Group II subfamily. K49 sub-subfamily. In terms of assembly, homodimer; non-covalently linked. As to expression, expressed by the venom gland.

The protein resides in the secreted. Its function is as follows. Snake venom phospholipase A2 homolog that lacks enzymatic activity. Is myotoxic and displays edema-inducing activities. A model of myotoxic mechanism has been proposed: an apo Lys49-PLA2 is activated by the entrance of a hydrophobic molecule (e.g. fatty acid) at the hydrophobic channel of the protein leading to a reorientation of a monomer. This reorientation causes a transition between 'inactive' to 'active' states, causing alignment of C-terminal and membrane-docking sites (MDoS) side-by-side and putting the membrane-disruption sites (MDiS) in the same plane, exposed to solvent and in a symmetric position for both monomers. The MDoS region stabilizes the toxin on membrane by the interaction of charged residues with phospholipid head groups. Subsequently, the MDiS region destabilizes the membrane with penetration of hydrophobic residues. This insertion causes a disorganization of the membrane, allowing an uncontrolled influx of ions (i.e. calcium and sodium), and eventually triggering irreversible intracellular alterations and cell death. The sequence is that of Basic phospholipase A2 homolog 4a from Bothrops asper (Terciopelo).